The following is a 1391-amino-acid chain: DNA-directed RNA polymerase subunit beta' (1391 aa).

Zn(2+) contacts are provided by Cys72, Cys74, Cys87, and Cys90. Residues Asp462, Asp464, and Asp466 each coordinate Mg(2+). Zn(2+) is bound by residues Cys816, Cys890, Cys897, and Cys900.

Belongs to the RNA polymerase beta' chain family. The RNAP catalytic core consists of 2 alpha, 1 beta, 1 beta' and 1 omega subunit. When a sigma factor is associated with the core the holoenzyme is formed, which can initiate transcription. Mg(2+) is required as a cofactor. Zn(2+) serves as cofactor.

It catalyses the reaction RNA(n) + a ribonucleoside 5'-triphosphate = RNA(n+1) + diphosphate. Functionally, DNA-dependent RNA polymerase catalyzes the transcription of DNA into RNA using the four ribonucleoside triphosphates as substrates. The sequence is that of DNA-directed RNA polymerase subunit beta' from Neisseria meningitidis serogroup B (strain ATCC BAA-335 / MC58).